The chain runs to 555 residues: MTRHDSTRVIRAATGTTLTAKSWLTEAPLRMLMNNLDPDVAERPQELVVYGGIGRAARDWESFDAIVAALTRLDDDQTLLVQSGKPVGVFRTHADAPRVLIANSNLVPRWATWDHFNELDKKGLAMYGQMTAGSWIYIGAQGIVQGTYETFVEMGRQHYGGSLAGKWLFTGGLGGMGGAQPLAAVMAGASCLAVECRRSSIDMRLRTGYLDTWTDSLDEALRLIEESCTAKRPLSVGLLGNVADVLDELLLRGIKPDLLTDQTSAHDPVNGYLPQGWSVEEWDAKRVSAPKDVEAAAREAMANHIRAMLTFHALGVPTVDYGNNLRQMALEEGIDNAFDFPGFVPAYIRPLFCRGIGPFRWVALSGDPEDIAKTDAKVKELIPDDAHLHRWLDMAAEKIAFQGLPARICWVGLGDRHRLGLAFNAMVRSGELKAPVVIGRDHLDSGSVASPNRETEAMADGSDAVSDWPLLNALLNTASGATWVSLHHGGGVGMGFSQHAGMVIVCDGSEAADKRIERVLWNDPATGVMRHADAGYAIAVECAKDQGLDLPGILS.

Residues 51–52 (GG), Q129, 175–177 (GMG), E195, 262–266 (QTSAH), 272–273 (YL), and Y321 contribute to the NAD(+) site. C409 is an active-site residue. G491 serves as a coordination point for NAD(+).

It belongs to the urocanase family. It depends on NAD(+) as a cofactor.

The protein localises to the cytoplasm. The enzyme catalyses 4-imidazolone-5-propanoate = trans-urocanate + H2O. It functions in the pathway amino-acid degradation; L-histidine degradation into L-glutamate; N-formimidoyl-L-glutamate from L-histidine: step 2/3. Its function is as follows. Catalyzes the conversion of urocanate to 4-imidazolone-5-propionate. The sequence is that of Urocanate hydratase from Xanthomonas campestris pv. campestris (strain ATCC 33913 / DSM 3586 / NCPPB 528 / LMG 568 / P 25).